A 241-amino-acid polypeptide reads, in one-letter code: Small ribosomal subunit protein uS2 (241 aa).

Belongs to the universal ribosomal protein uS2 family.

The protein is Small ribosomal subunit protein uS2 of Klebsiella pneumoniae subsp. pneumoniae (strain ATCC 700721 / MGH 78578).